We begin with the raw amino-acid sequence, 297 residues long: Phosphoribosylaminoimidazole-succinocarboxamide synthase (297 aa).

This sequence belongs to the SAICAR synthetase family.

The enzyme catalyses 5-amino-1-(5-phospho-D-ribosyl)imidazole-4-carboxylate + L-aspartate + ATP = (2S)-2-[5-amino-1-(5-phospho-beta-D-ribosyl)imidazole-4-carboxamido]succinate + ADP + phosphate + 2 H(+). It participates in purine metabolism; IMP biosynthesis via de novo pathway; 5-amino-1-(5-phospho-D-ribosyl)imidazole-4-carboxamide from 5-amino-1-(5-phospho-D-ribosyl)imidazole-4-carboxylate: step 1/2. The chain is Phosphoribosylaminoimidazole-succinocarboxamide synthase from Mycobacterium sp. (strain JLS).